We begin with the raw amino-acid sequence, 130 residues long: RutC family protein slr0709 (130 aa).

This sequence belongs to the RutC family.

This chain is RutC family protein slr0709, found in Synechocystis sp. (strain ATCC 27184 / PCC 6803 / Kazusa).